We begin with the raw amino-acid sequence, 532 residues long: MMHNQGNSNGDPAAPMSNLQEPQVPMLSQTPNPVPMMNAPAPLLRPAIPGARGARPPRLGLAIPPSPNVKPVGGNAAGPPLQVPSRPPLPVLHLATPMGSTVAPQEHQPNRGAQPGQSASGGSESSAAHSRTGSFGPLDGRGSNPTSAGSQYSALSFASQYGLGGAKPHGTPDPVSAVGSLYSNASEGGVGMEREGSMHGLEASFDKMSLEKARTSDAEDLDDEGWRIVSMENRIVELGGLGEGAGGAVTRCKLKGGKTVFALKVITTNPDPDIKKQILREINFNKGCASEHICRYYGGFLDPSTATISIAMEFCEGGSLDSIYKEVKRLGGRTGEKVLGKIAEGVLQGLTYLEAKRILHRDIKPSNILLCRNGEVKLCDFGVSGDFGTKGEANTFIGTSYYMAPERITGQTYTITSDVWSTGVTLLEVAQHRFPFPADGTEMQPRAGLIDLLTYIVQQPIPKLKDEPEAGIFWSDNFKHFIEACLEKNPKRRGMPWKMLEHPWMTELKTKRVNMSKYLTQVWGWDDPKGSK.

The 271-residue stretch at 235 to 505 folds into the Protein kinase domain; that stretch reads IVELGGLGEG…PWKMLEHPWM (271 aa). ATP contacts are provided by residues 241-249 and Lys-264; that span reads LGEGAGGAV. The active-site Proton acceptor is Asp-362.

Belongs to the protein kinase superfamily. STE Ser/Thr protein kinase family. MAP kinase kinase subfamily.

The catalysed reaction is L-seryl-[protein] + ATP = O-phospho-L-seryl-[protein] + ADP + H(+). It catalyses the reaction L-threonyl-[protein] + ATP = O-phospho-L-threonyl-[protein] + ADP + H(+). In terms of biological role, mitogen-activated protein kinase kinase, part of the mkh1-mkk1-spm1 MAPK cascade that regulates regulates vegetative growth, conidial formation, colony surface hydrophobicity, osmotic stress, cell wall integrity maintenance, carbon and nitrogen source utilization, chitin distribution, septa formation, and pathogenicity. The chain is Mitogen-activated protein kinase kinase mkk1 from Cytospora mali (Apple Valsa canker fungus).